A 317-amino-acid chain; its full sequence is Homoserine kinase (317 aa).

95-105 (PHSRGLGSSAA) provides a ligand contact to ATP.

The protein belongs to the GHMP kinase family. Homoserine kinase subfamily.

The protein localises to the cytoplasm. The catalysed reaction is L-homoserine + ATP = O-phospho-L-homoserine + ADP + H(+). It functions in the pathway amino-acid biosynthesis; L-threonine biosynthesis; L-threonine from L-aspartate: step 4/5. In terms of biological role, catalyzes the ATP-dependent phosphorylation of L-homoserine to L-homoserine phosphate. This chain is Homoserine kinase, found in Mycolicibacterium smegmatis (strain ATCC 700084 / mc(2)155) (Mycobacterium smegmatis).